The chain runs to 356 residues: Malate dehydrogenase, glyoxysomal (356 aa).

The transit peptide at 1–36 directs the protein to the glyoxysome; that stretch reads MQPIPDVNQRIARISAHLHPPKYQMEESSVLRRANC. NAD(+)-binding positions include 51–57 and Asp-77; that span reads GAAGGIG. The substrate site is built by Arg-124 and Arg-130. NAD(+) is bound by residues Asn-137 and 160–162; that span reads ISN. Residues Asn-162 and Arg-196 each coordinate substrate. His-220 acts as the Proton acceptor in catalysis. Met-271 serves as a coordination point for NAD(+).

This sequence belongs to the LDH/MDH superfamily. MDH type 1 family. Homodimer.

The protein resides in the glyoxysome. The enzyme catalyses (S)-malate + NAD(+) = oxaloacetate + NADH + H(+). The polypeptide is Malate dehydrogenase, glyoxysomal (MDHG) (Cucumis sativus (Cucumber)).